We begin with the raw amino-acid sequence, 762 residues long: 5-methyltetrahydropteroyltriglutamate--homocysteine methyltransferase (762 aa).

5-methyltetrahydropteroyltri-L-glutamate contacts are provided by residues Arg-17–Lys-20 and Lys-111. Residues Ile-435–Ser-437 and Glu-488 each bind L-homocysteine. L-methionine contacts are provided by residues Ile-435–Ser-437 and Glu-488. 5-methyltetrahydropteroyltri-L-glutamate contacts are provided by residues Arg-519 to Cys-520 and Trp-565. Asp-603 contributes to the L-homocysteine binding site. Asp-603 lines the L-methionine pocket. Residue Glu-609 participates in 5-methyltetrahydropteroyltri-L-glutamate binding. The Zn(2+) site is built by His-645, Cys-647, and Glu-669. Residue His-698 is the Proton donor of the active site. A Zn(2+)-binding site is contributed by Cys-730.

It belongs to the vitamin-B12 independent methionine synthase family. It depends on Zn(2+) as a cofactor.

It catalyses the reaction 5-methyltetrahydropteroyltri-L-glutamate + L-homocysteine = tetrahydropteroyltri-L-glutamate + L-methionine. The protein operates within amino-acid biosynthesis; L-methionine biosynthesis via de novo pathway; L-methionine from L-homocysteine (MetE route): step 1/1. Catalyzes the transfer of a methyl group from 5-methyltetrahydrofolate to homocysteine resulting in methionine formation. In Bacillus anthracis (strain A0248), this protein is 5-methyltetrahydropteroyltriglutamate--homocysteine methyltransferase.